The chain runs to 523 residues: Tryptamine 5-hydroxylase (523 aa).

Residues 5-25 form a helical membrane-spanning segment; it reads MASTMSLALLVLSAAYVLVAL. Cys-453 serves as a coordination point for heme.

Belongs to the cytochrome P450 family. It depends on heme as a cofactor.

Its subcellular location is the endoplasmic reticulum membrane. It carries out the reaction tryptamine + reduced [NADPH--hemoprotein reductase] + O2 = serotonin + oxidized [NADPH--hemoprotein reductase] + H2O + H(+). Involved in serotonin biosynthesis. Catalyzes the conversion of tryptamine to serotonin. Accumulation of serotonin may play a role in innate immunity. In Oryza sativa subsp. japonica (Rice), this protein is Tryptamine 5-hydroxylase.